The sequence spans 143 residues: Large ribosomal subunit protein uL13 (143 aa).

It belongs to the universal ribosomal protein uL13 family. As to quaternary structure, part of the 50S ribosomal subunit.

This protein is one of the early assembly proteins of the 50S ribosomal subunit, although it is not seen to bind rRNA by itself. It is important during the early stages of 50S assembly. This is Large ribosomal subunit protein uL13 from Neisseria gonorrhoeae (strain ATCC 700825 / FA 1090).